A 732-amino-acid polypeptide reads, in one-letter code: Polyadenylate-binding protein, cytoplasmic and nuclear (732 aa).

Polar residues predominate over residues 1 to 19; it reads MSAETSTTPAPAENTNGTP. The interval 1-26 is disordered; that stretch reads MSAETSTTPAPAENTNGTPDNAPAPE. RRM domains lie at 42–120, 130–207, 223–300, and 326–454; these read ASLY…WSQR, GNVF…HHIS, TNIY…RAQK, and VNLY…LAQR. 2 disordered regions span residues 357-413 and 706-732; these read VMRD…KKPL and MKNKSDEPAAEKPKEAAQEAPAEENKA. The span at 371–412 shows a compositional bias: basic and acidic residues; that stretch reads SETKESANKENEKAAEGEKEPAAEEKEKEEKKEAEQKPEKKP. One can recognise a PABC domain in the interval 630–707; that stretch reads VGVLTAQALS…ALSVYDEYMK (78 aa).

The protein belongs to the polyadenylate-binding protein type-1 family.

Its subcellular location is the cytoplasm. The protein resides in the nucleus. Binds the poly(A) tail of mRNA. Appears to be an important mediator of the multiple roles of the poly(A) tail in mRNA biogenesis, stability and translation. In the nucleus, involved in both mRNA cleavage and polyadenylation. Is also required for efficient mRNA export to the cytoplasm. Acts in concert with a poly(A)-specific nuclease (PAN) to affect poly(A) tail shortening, which may occur concomitantly with either nucleocytoplasmic mRNA transport or translational initiation. In the cytoplasm, stimulates translation initiation and regulates mRNA decay through translation termination-coupled poly(A) shortening, probably mediated by PAN. This is Polyadenylate-binding protein, cytoplasmic and nuclear (pab1) from Emericella nidulans (strain FGSC A4 / ATCC 38163 / CBS 112.46 / NRRL 194 / M139) (Aspergillus nidulans).